Here is a 162-residue protein sequence, read N- to C-terminus: SsrA-binding protein (162 aa).

Residues 140–162 (EDRRHDIKERETKREMDRAMRRR) are disordered.

Belongs to the SmpB family.

The protein resides in the cytoplasm. In terms of biological role, required for rescue of stalled ribosomes mediated by trans-translation. Binds to transfer-messenger RNA (tmRNA), required for stable association of tmRNA with ribosomes. tmRNA and SmpB together mimic tRNA shape, replacing the anticodon stem-loop with SmpB. tmRNA is encoded by the ssrA gene; the 2 termini fold to resemble tRNA(Ala) and it encodes a 'tag peptide', a short internal open reading frame. During trans-translation Ala-aminoacylated tmRNA acts like a tRNA, entering the A-site of stalled ribosomes, displacing the stalled mRNA. The ribosome then switches to translate the ORF on the tmRNA; the nascent peptide is terminated with the 'tag peptide' encoded by the tmRNA and targeted for degradation. The ribosome is freed to recommence translation, which seems to be the essential function of trans-translation. This chain is SsrA-binding protein, found in Myxococcus xanthus (strain DK1622).